The sequence spans 577 residues: MEKDIYEKIMDLAKRRGYLWSSFEIYGGIAGFVDYGPLGCLLKNNIISKFREQYIIKEGFYEIESPTVTPYEVLKASGHVDNFTDPIVECKNCLESFRADHLIEEFVDVDTEGKTLKELDELIRKHNIRCPKCGGELGEVKKFNLMFVTSIGPGGKRTGYMRPETAQGIFIQFRRLAQFFRNKLPFGVVQIGKSYRNEISPRQGVIRLREFTQAEIEYFVHPERKEHEKFDLVKDEVVPLLPAERQMDENLSDDEKVIKISIGEAVEKGIIRHQTIAYFIALTKRFLEAIGIDKDKIRFRQHLPNEMAHYAIDCWDAEIYTERFGWIECVGIADRTDYDLRSHSAHSGVELSVFVELDEEREIETYEINLNYKVVGKIFKKDTKAIEAYINNLSEKEKEEFVKNIENDGKVIINIDGKEFEILKDYVEIKKVKKVIKGEKVIPHVIEPSYGIDRITYCLLEHSYREEEDRVYLDLKPSIAPIKAYVLPLVNKDDMPKIAKEIEQMLRENGIIAEYDDSGAIGRRYMRADEIGVPFCITVDGQTLEDRTVTVRERNTREQVRVKIDELVDYLKERLKE.

Substrate-binding residues include Arg98 and Glu164. Residues 196 to 198, 206 to 211, 328 to 329, and 451 to 454 each bind ATP; these read RNE, IRLREF, EC, and GIDR. Substrate is bound at residue 211 to 215; it reads FTQAE. 447–451 serves as a coordination point for substrate; it reads EPSYG.

This sequence belongs to the class-II aminoacyl-tRNA synthetase family.

It localises to the cytoplasm. It catalyses the reaction tRNA(Gly) + glycine + ATP = glycyl-tRNA(Gly) + AMP + diphosphate. Catalyzes the attachment of glycine to tRNA(Gly). The chain is Glycine--tRNA ligase from Methanocaldococcus jannaschii (strain ATCC 43067 / DSM 2661 / JAL-1 / JCM 10045 / NBRC 100440) (Methanococcus jannaschii).